A 205-amino-acid polypeptide reads, in one-letter code: Adenylyl-sulfate kinase (205 aa).

Residue 31 to 38 coordinates ATP; the sequence is GLSGAGKS. Ser-105 acts as the Phosphoserine intermediate in catalysis.

It belongs to the APS kinase family.

It carries out the reaction adenosine 5'-phosphosulfate + ATP = 3'-phosphoadenylyl sulfate + ADP + H(+). The protein operates within sulfur metabolism; hydrogen sulfide biosynthesis; sulfite from sulfate: step 2/3. Functionally, catalyzes the synthesis of activated sulfate. This is Adenylyl-sulfate kinase from Shewanella sp. (strain ANA-3).